A 164-amino-acid polypeptide reads, in one-letter code: HTH-type transcriptional regulator IscR (164 aa).

One can recognise an HTH rrf2-type domain in the interval 2–131 (RLTSKGRYAV…NNITLGELVN (130 aa)). A DNA-binding region (H-T-H motif) is located at residues 28–51 (LADISERQGISLSYLEQLFSRLRK). [2Fe-2S] cluster contacts are provided by Cys92, Cys98, and Cys104.

It depends on [2Fe-2S] cluster as a cofactor.

Regulates the transcription of several operons and genes involved in the biogenesis of Fe-S clusters and Fe-S-containing proteins. The polypeptide is HTH-type transcriptional regulator IscR (Salmonella choleraesuis (strain SC-B67)).